Consider the following 226-residue polypeptide: Transmembrane protein 204 (226 aa).

The Cytoplasmic portion of the chain corresponds to 1-5; it reads MTVQK. The chain crosses the membrane as a helical span at residues 6-26; it reads LVATAVLVALVSLILNNAAAF. Over 27–103 the chain is Extracellular; the sequence is TPNWVYQTLE…LQFDMMRACN (77 aa). A helical membrane pass occupies residues 104-124; sequence LVATAALAVGQITFILGLTGL. Topologically, residues 125–136 are cytoplasmic; it reads PLMSPESQCWEE. The helical transmembrane segment at 137–157 threads the bilayer; sequence AMAAAFQLASFVLVIGLVTFY. Residues 158 to 170 lie on the Extracellular side of the membrane; that stretch reads RIGPYTNLSWSCY. N-linked (GlcNAc...) asparagine glycosylation occurs at Asn164. The helical transmembrane segment at 171–191 threads the bilayer; it reads LNIGACLLATLAAAMLIWNIL. Residues 192–226 lie on the Cytoplasmic side of the membrane; sequence HRREDCMAPRVIVISRSLTARFRRGLDNDYVESPC.

It localises to the cell junction. It is found in the adherens junction. The protein localises to the cell membrane. Its function is as follows. Can influence paracellular permeability. Appears to be involved in cell-cell interactions through adherens. The sequence is that of Transmembrane protein 204 (Tmem204) from Rattus norvegicus (Rat).